Here is a 475-residue protein sequence, read N- to C-terminus: ATP synthase subunit beta (475 aa).

Residue 156-163 (GGAGVGKT) participates in ATP binding.

It belongs to the ATPase alpha/beta chains family. F-type ATPases have 2 components, CF(1) - the catalytic core - and CF(0) - the membrane proton channel. CF(1) has five subunits: alpha(3), beta(3), gamma(1), delta(1), epsilon(1). CF(0) has three main subunits: a(1), b(2) and c(9-12). The alpha and beta chains form an alternating ring which encloses part of the gamma chain. CF(1) is attached to CF(0) by a central stalk formed by the gamma and epsilon chains, while a peripheral stalk is formed by the delta and b chains.

It is found in the cell membrane. It catalyses the reaction ATP + H2O + 4 H(+)(in) = ADP + phosphate + 5 H(+)(out). Functionally, produces ATP from ADP in the presence of a proton gradient across the membrane. The catalytic sites are hosted primarily by the beta subunits. This is ATP synthase subunit beta from Mycoplasma pneumoniae (strain ATCC 29342 / M129 / Subtype 1) (Mycoplasmoides pneumoniae).